The primary structure comprises 452 residues: Maltoporin (452 aa).

The first 25 residues, 1 to 25, serve as a signal peptide directing secretion; it reads MMITLRKLPLAVAVAAGVMSAQAMA.

The protein belongs to the porin LamB (TC 1.B.3) family. Homotrimer formed of three 18-stranded antiparallel beta-barrels, containing three independent channels.

Its subcellular location is the cell outer membrane. It carries out the reaction beta-maltose(in) = beta-maltose(out). Involved in the transport of maltose and maltodextrins. The protein is Maltoporin of Salmonella paratyphi A (strain ATCC 9150 / SARB42).